A 118-amino-acid chain; its full sequence is Class II hydrophobin CRP (118 aa).

The N-terminal stretch at 1 to 22 (MQFSIIAISFLASLAMASPAKR) is a signal peptide. Residues 20–46 (AKRGGGGGGSGSGSGSGSGSGSGGGST) form a disordered region. The segment covering 22 to 45 (RGGGGGGSGSGSGSGSGSGSGGGS) has biased composition (gly residues). Tandem repeats lie at residues 29–30 (SG), 31–32 (SG), 33–34 (SG), 35–36 (SG), 37–38 (SG), 39–40 (SG), and 41–42 (SG). The segment at 29–42 (SGSGSGSGSGSGSG) is 7 X 2 AA tandem repeats of S-G. Disulfide bonds link cysteine 51–cysteine 100, cysteine 61–cysteine 91, cysteine 62–cysteine 74, and cysteine 101–cysteine 112.

It belongs to the cerato-ulmin hydrophobin family. As to quaternary structure, homotetramer. Further self-assembles to form highly ordered films at water-air interfaces through intermolecular interactions.

Its subcellular location is the secreted. It localises to the cell wall. Aerial growth, conidiation, and dispersal of filamentous fungi in the environment rely upon a capability of their secreting small amphipathic proteins called hydrophobins (HPBs) with low sequence identity. Class I can self-assemble into an outermost layer of rodlet bundles on aerial cell surfaces, conferring cellular hydrophobicity that supports fungal growth, development and dispersal; whereas Class II form highly ordered films at water-air interfaces through intermolecular interactions but contribute nothing to the rodlet structure. Cryparin is a class II hydrophobin that is the most abundant protein produced by this fungus when grown in liquid culture and that plays an essential role in the fitness of this important plant pathogen by facilitating the eruption of the fungal fruiting bodies through the bark of its host tree. The polypeptide is Class II hydrophobin CRP (Cryphonectria parasitica (Chestnut blight fungus)).